Reading from the N-terminus, the 241-residue chain is EFLEKVQIIKNTNLSNSLCILSIPCTVDIDTVITETINKYDSIIDGILLSGLGYDESNETRTNAFKNILNILPNNKLKFIQLSNGNPIEILHAIYHGIDVIEPNFPYYLAKNGKAINMNLKMDNLQDGNEYNLQDKNNDNIYDINLLDFKNDVNFIIDLNNPKYVLDHSTITCNSPRKESKSYIHHLLKCHELTAHVILTYHNLYIYRSFFQEIQLHIKENNFLSYINWFIEKNELNKKEE.

It belongs to the queuine tRNA-ribosyltransferase family.

The sequence is that of Queuine tRNA-ribosyltransferase-like protein from Plasmodium falciparum.